The sequence spans 650 residues: Probable ATP-dependent RNA helicase DDX17 (650 aa).

The interval Met1–Leu38 is disordered. Positions Gly7–Gly16 are enriched in basic and acidic residues. N6-acetyllysine is present on residues Lys29, Lys30, and Lys42. Lys50 is covalently cross-linked (Glycyl lysine isopeptide (Lys-Gly) (interchain with G-Cter in SUMO); alternate). Lys50 is covalently cross-linked (Glycyl lysine isopeptide (Lys-Gly) (interchain with G-Cter in SUMO1); alternate). Lys50 participates in a covalent cross-link: Glycyl lysine isopeptide (Lys-Gly) (interchain with G-Cter in SUMO2); alternate. The Q motif signature appears at Phe92–Cys120. The region spanning Phe123–Ile298 is the Helicase ATP-binding domain. Ala136–Thr143 contributes to the ATP binding site. Positions Asp246–Asp249 match the DEAD box motif. A Helicase C-terminal domain is found at Lys326–Val473. Phosphothreonine is present on Thr444. Lys449 participates in a covalent cross-link: Glycyl lysine isopeptide (Lys-Gly) (interchain with G-Cter in SUMO2). Residues Lys468 to Lys650 are transactivation domain. Disordered regions lie at residues Leu472 to Pro543 and Ala583 to Lys650. Residues Arg489–Leu499 are compositionally biased toward polar residues. Positions Glu504–Arg531 are enriched in basic and acidic residues. Positions Ala583–Gln609 are enriched in low complexity. Arg605 carries the post-translational modification Omega-N-methylarginine. A compositionally biased stretch (polar residues) spans Pro610–Ala619. Residues Tyr638–Lys650 show a composition bias toward pro residues. The interaction with YAP1 stretch occupies residues Pro639–Pro647.

This sequence belongs to the DEAD box helicase family. DDX5/DBP2 subfamily. As to quaternary structure, interacts with DDX5 in an RNA-independent manner. Interacts with CDK9 transcription elongation complex under basal conditions. Following cell stimulation with poly(I:C), a synthetic double-stranded RNA mimicking viral infection, the interaction with CDK9 is decreased. Interacts with ESR1 in an estrogen-independent manner. Interacts with HNRNPH1; this interaction is important for the regulation of alternative splicing on G-quadruplex structures. At high, but not low, cell density, interacts with DROSHA and DGCR8, the core components of the microprocessor complex involved in the maturation of primary microRNAs (pri-miRNAs) into pre-miRNAs. The interaction with DGCR8 is reduced during mitosis. At low, but not high, cell density, interacts with YAP1 and with its paralog, WWTR1/TAZ. Interactions with DROSHA and YAP1 are mutually exclusive. In vitro, the pre-miRNA processing activity of the DDX17-containing microprocessor complex is weaker than that of the DROSHA/DGCR8 microprocessor complex. Interacts with UPF3B. Interacts with NFAT5; this interaction leads to DDX17 recruitment to LNC2 and S100A4 promoters and NFAT5-mediated DDX17-enhanced transactivation. Interacts with HDAC1, HDAC2 and HDAC3; this interaction with HDAC1 and HDAC3, but not HDAC2, depends upon DDX17 acetylation. Interacts with ZC3HAV1 (via N-terminal domain) in an RNA-independent manner. Interacts with EXOSC3/RRP40 and EXOSC5/RRP46; this interaction may be indirect and mediated by ZC3HAV1-binding. Interacts with EP300; this interaction leads to acetylation at lysine residues. Interacts with CREBBP/CBP and KAT2B/P/CAF. Directly interacts with CTNNB1. Interacts with MYOD1. Interacts with TP53. Interacts with DCP1A in an RNA-independent manner. Interacts with DCP2 in an RNA-dependent manner. Interacts with DHX36; this interaction occurs in a RNA-dependent manner. Interacts with ERCC6. In terms of processing, sumoylation significantly increases stability. It also promotes interaction specifically with HDAC1 (but not HDAC2, nor HDAC3) and strongly stimulates ESR1 and TP53 coactivation. Acetylation at lysine residues stabilizes the protein, stimulates interaction with HDAC1 and HDAC3, but not HDAC2, and represses ESR1 and TP53 coactivation activity.

It localises to the nucleus. Its subcellular location is the nucleolus. The protein localises to the cytoplasm. It is found in the cytosol. The catalysed reaction is ATP + H2O = ADP + phosphate + H(+). In terms of biological role, as an RNA helicase, unwinds RNA and alters RNA structures through ATP binding and hydrolysis. Involved in multiple cellular processes, including pre-mRNA splicing, alternative splicing, ribosomal RNA processing and miRNA processing, as well as transcription regulation. Regulates the alternative splicing of exons exhibiting specific features. This function requires the RNA helicase activity. Affects NFAT5 and histone macro-H2A.1/MACROH2A1 alternative splicing in a CDK9-dependent manner. Affects splicing of mediators of steroid hormone signaling pathway, including kinases that phosphorylates ESR1 and transcriptional regulators. By acting splicing of regulatory factors, participates in ESR1 and AR stabilization. Promotes the inclusion of specific AC-rich alternative exons in CD44 transcripts. In myoblasts and epithelial cells, cooperates with HNRNPH1 to control the splicing of specific subsets of exons. In addition to binding mature mRNAs, also interacts with certain pri-microRNAs, including MIR132/miR-132, and stabilizes the primary transcript. Also participates in the MIR132 processing, resulting in significantly higher levels of mature MIR132 than MIR212 despite the fact that both are cotranscribed and co-regulated. Binding of pri-microRNAs may occur on the 3' segment flanking the stem loop via the 5'-[ACG]CAUC[ACU]-3' consensus sequence. Participates in MYC down-regulation at high cell density through the production of MYC-targeting microRNAs. Along with DDX5, may be involved in the processing of the 32S intermediate into the mature 28S rRNA. Promoter-specific transcription regulator, functioning as a coactivator or corepressor depending on the context of the promoter and the transcriptional complex in which it exists. Enhances NFAT5 transcriptional activity. Synergizes with TP53 in the activation of the MDM2 promoter; this activity requires acetylation on lysine residues. May also coactivate MDM2 transcription through a TP53-independent pathway. Coactivates MMP7 transcription. Along with CTNNB1, coactivates MYC, JUN, FOSL1 and cyclin D1/CCND1 transcription. Alone or in combination with DDX5 and/or SRA1 non-coding RNA, plays a critical role in promoting the assembly of proteins required for the formation of the transcription initiation complex and chromatin remodeling leading to coactivation of MYOD1-dependent transcription. This helicase-independent activity is required for skeletal muscle cells to properly differentiate into myotubes. During epithelial-to-mesenchymal transition, coregulates SMAD-dependent transcriptional activity, directly controlling key effectors of differentiation, including miRNAs which in turn directly repress its expression. Plays a role in estrogen and testosterone signaling pathway at several levels. Mediates the use of alternative promoters in estrogen-responsive genes and regulates transcription and splicing of a large number of steroid hormone target genes. Contrary to the splicing regulation activity, transcriptional coregulation of the estrogen receptor ESR1 is helicase activity-independent. Plays a role in innate immunity. Specifically restricts bunyavirus infection, including Rift Valley fever virus (RVFV) or La Crosse virus (LACV), but not vesicular stomatitis virus (VSV), in an interferon- and DROSHA-independent manner. Binds to RVFV RNA, likely via structured viral RNA elements. Promotes mRNA degradation mediated by the antiviral zinc-finger protein ZC3HAV1, in an ATPase-dependent manner. This is Probable ATP-dependent RNA helicase DDX17 (Ddx17) from Mus musculus (Mouse).